A 289-amino-acid chain; its full sequence is ATP synthase gamma chain (289 aa).

Belongs to the ATPase gamma chain family. As to quaternary structure, F-type ATPases have 2 components, CF(1) - the catalytic core - and CF(0) - the membrane proton channel. CF(1) has five subunits: alpha(3), beta(3), gamma(1), delta(1), epsilon(1). CF(0) has three main subunits: a, b and c.

Its subcellular location is the cell inner membrane. Its function is as follows. Produces ATP from ADP in the presence of a proton gradient across the membrane. The gamma chain is believed to be important in regulating ATPase activity and the flow of protons through the CF(0) complex. This chain is ATP synthase gamma chain, found in Azorhizobium caulinodans (strain ATCC 43989 / DSM 5975 / JCM 20966 / LMG 6465 / NBRC 14845 / NCIMB 13405 / ORS 571).